Consider the following 506-residue polypeptide: BTB/POZ domain-containing protein At3g22104 (506 aa).

The 71-residue stretch at serine 6–methionine 76 folds into the BTB domain. Positions threonine 187–glutamine 435 constitute an NPH3 domain. Residues glutamine 421–serine 492 are a coiled coil. A disordered region spans residues valine 485–serine 506.

This sequence belongs to the NPH3 family.

The protein operates within protein modification; protein ubiquitination. Functionally, may act as a substrate-specific adapter of an E3 ubiquitin-protein ligase complex (CUL3-RBX1-BTB) which mediates the ubiquitination and subsequent proteasomal degradation of target proteins. This Arabidopsis thaliana (Mouse-ear cress) protein is BTB/POZ domain-containing protein At3g22104.